The sequence spans 311 residues: Beta-lactamase (311 aa).

The segment at residues 1-34 (MRLTQAPPSRRTLMTLGAGATMAALLPAGGAAYA) is a signal peptide (tat-type signal). The active-site Acyl-ester intermediate is the serine 87. Residue 255–257 (KTG) coordinates substrate.

This sequence belongs to the class-A beta-lactamase family. Post-translationally, predicted to be exported by the Tat system. The position of the signal peptide cleavage has not been experimentally proven.

It carries out the reaction a beta-lactam + H2O = a substituted beta-amino acid. In Kitasatospora aureofaciens (Streptomyces aureofaciens), this protein is Beta-lactamase (bla).